The chain runs to 311 residues: Putative pyruvate, phosphate dikinase regulatory protein (311 aa).

180–187 (GVSRSSKT) lines the ADP pocket.

The protein belongs to the pyruvate, phosphate/water dikinase regulatory protein family. PDRP subfamily.

It catalyses the reaction N(tele)-phospho-L-histidyl/L-threonyl-[pyruvate, phosphate dikinase] + ADP = N(tele)-phospho-L-histidyl/O-phospho-L-threonyl-[pyruvate, phosphate dikinase] + AMP + H(+). The enzyme catalyses N(tele)-phospho-L-histidyl/O-phospho-L-threonyl-[pyruvate, phosphate dikinase] + phosphate + H(+) = N(tele)-phospho-L-histidyl/L-threonyl-[pyruvate, phosphate dikinase] + diphosphate. Bifunctional serine/threonine kinase and phosphorylase involved in the regulation of the pyruvate, phosphate dikinase (PPDK) by catalyzing its phosphorylation/dephosphorylation. This Paramagnetospirillum magneticum (strain ATCC 700264 / AMB-1) (Magnetospirillum magneticum) protein is Putative pyruvate, phosphate dikinase regulatory protein.